The chain runs to 284 residues: tRNA uridine(34) hydroxylase (284 aa).

The region spanning 132 to 226 (AGRPVVMLDT…YFEEVGGAHY (95 aa)) is the Rhodanese domain. Residue Cys186 is the Cysteine persulfide intermediate of the active site.

Belongs to the TrhO family.

The catalysed reaction is uridine(34) in tRNA + AH2 + O2 = 5-hydroxyuridine(34) in tRNA + A + H2O. Its function is as follows. Catalyzes oxygen-dependent 5-hydroxyuridine (ho5U) modification at position 34 in tRNAs. In Burkholderia cenocepacia (strain HI2424), this protein is tRNA uridine(34) hydroxylase.